The primary structure comprises 180 residues: Shikimate kinase (180 aa).

Position 14-19 (14-19) interacts with ATP; it reads GAGKSC. Ser18 serves as a coordination point for Mg(2+). Residues Asp36, Arg60, and Gly82 each coordinate substrate. Arg120 lines the ATP pocket. Arg139 contributes to the substrate binding site.

This sequence belongs to the shikimate kinase family. As to quaternary structure, monomer. It depends on Mg(2+) as a cofactor.

Its subcellular location is the cytoplasm. It catalyses the reaction shikimate + ATP = 3-phosphoshikimate + ADP + H(+). Its pathway is metabolic intermediate biosynthesis; chorismate biosynthesis; chorismate from D-erythrose 4-phosphate and phosphoenolpyruvate: step 5/7. Its function is as follows. Catalyzes the specific phosphorylation of the 3-hydroxyl group of shikimic acid using ATP as a cosubstrate. In Xanthomonas axonopodis pv. citri (strain 306), this protein is Shikimate kinase.